A 162-amino-acid chain; its full sequence is Zinc finger protein ZAT12 (162 aa).

C2H2-type zinc fingers lie at residues 39 to 61 and 82 to 104; these read FTCKTCLKQFHSFQALGGHRASH and HPCPICGVEFPMGQALGGHMRRH.

Expressed in roots, stems and flowers.

It localises to the nucleus. Functionally, transcriptional repressor involved in light acclimation, cold and oxidative stress responses. May regulate a collection of transcripts involved in response to high-light, cold and oxidative stress. This Arabidopsis thaliana (Mouse-ear cress) protein is Zinc finger protein ZAT12 (ZAT12).